Consider the following 140-residue polypeptide: Large ribosomal subunit protein uL11 (140 aa).

This sequence belongs to the universal ribosomal protein uL11 family. In terms of assembly, part of the ribosomal stalk of the 50S ribosomal subunit. Interacts with L10 and the large rRNA to form the base of the stalk. L10 forms an elongated spine to which L12 dimers bind in a sequential fashion forming a multimeric L10(L12)X complex. In terms of processing, one or more lysine residues are methylated.

Its function is as follows. Forms part of the ribosomal stalk which helps the ribosome interact with GTP-bound translation factors. In Solidesulfovibrio magneticus (strain ATCC 700980 / DSM 13731 / RS-1) (Desulfovibrio magneticus), this protein is Large ribosomal subunit protein uL11.